Reading from the N-terminus, the 279-residue chain is Phosphatidylglycerol--prolipoprotein diacylglyceryl transferase (279 aa).

4 consecutive transmembrane segments (helical) span residues 4–24 (IGPLAIRWYGVLLTLAIFLGY), 44–64 (VVFWAVVFGVVGARLGYVLTS), 76–96 (LYIWHGGLSFHGAILGGGLTF), and 104–124 (GYPLWPYLDAATPGVALGIVA). Arg126 contributes to the a 1,2-diacyl-sn-glycero-3-phospho-(1'-sn-glycerol) binding site. The next 3 helical transmembrane spans lie at 182–202 (LTQVYGAVVGLILLFLSLYWL), 206–226 (PFYGYAFWQFVLWYSVLRSVL), and 245–265 (LGIGLFTATQVVSLPLVLLSL).

The protein belongs to the Lgt family.

Its subcellular location is the cell inner membrane. The catalysed reaction is L-cysteinyl-[prolipoprotein] + a 1,2-diacyl-sn-glycero-3-phospho-(1'-sn-glycerol) = an S-1,2-diacyl-sn-glyceryl-L-cysteinyl-[prolipoprotein] + sn-glycerol 1-phosphate + H(+). It participates in protein modification; lipoprotein biosynthesis (diacylglyceryl transfer). Catalyzes the transfer of the diacylglyceryl group from phosphatidylglycerol to the sulfhydryl group of the N-terminal cysteine of a prolipoprotein, the first step in the formation of mature lipoproteins. This chain is Phosphatidylglycerol--prolipoprotein diacylglyceryl transferase, found in Thermus thermophilus (strain ATCC 27634 / DSM 579 / HB8).